The primary structure comprises 357 residues: Popeye domain-containing protein 1 (357 aa).

Over 1 to 38 (MDTTAISPLTPLGVIPDLKNATSVPFNETACENWKEIH) the chain is Extracellular. Residues Asn20 and Asn27 are each glycosylated (N-linked (GlcNAc...) asparagine). A helical membrane pass occupies residues 39-59 (HLVFHVANICFAAGLVIPTTL). At 60–62 (NLH) the chain is on the cytoplasmic side. A helical membrane pass occupies residues 63-83 (MIFLRGLLTVGCALFIIWATL). At 84-89 (YRCALD) the chain is on the extracellular side. Residues 90-110 (IMIWNSVFLVVNLLHFIYLVY) traverse the membrane as a helical segment. The Cytoplasmic segment spans residues 111-357 (KRRPIKIEKE…AEKLELQRLP (247 aa)). The segment covering 309-323 (GTSSSSSLRPGRTSP) has biased composition (low complexity). A disordered region spans residues 309–357 (GTSSSSSLRPGRTSPYLRTSAKMKPIEESVEDDVFEAPSAEKLELQRLP). Residues 347–357 (SAEKLELQRLP) show a composition bias toward basic and acidic residues.

Belongs to the popeye family. As to quaternary structure, homodimer. Homodimerization requires the C-terminus cytoplasmic region. In terms of tissue distribution, expressed in the heart and skeletal muscle (at protein level). Isoform 1 and isoform 4: expressed in heart, muscle, brain, stomach, kidney, lung and spleen.

It localises to the lateral cell membrane. It is found in the cell junction. The protein localises to the tight junction. Its subcellular location is the membrane. The protein resides in the cell membrane. It localises to the sarcolemma. It is found in the caveola. Functionally, cell adhesion molecule involved in the establishment and/or maintenance of cell integrity. Involved in the formation and regulation of the tight junction (TJ) paracellular permeability barrier in epithelial cells. Induces primordial adhesive contact and aggregation of epithelial cells in a Ca(2+)-independent manner. Involved in epithelial movement during corneal sheet formation and regeneration. May play a role in VAMP3-mediated vesicular transport and recycling of receptor molecules. May play a role in the regulation of cell shape and movement by modulating the Rho-GTPase activity. May be involved in skeletal muscle and heart development as well as in the maintenance of heart function. May also be involved in striated muscle regeneration and in the regulation of cell spreading. In Gallus gallus (Chicken), this protein is Popeye domain-containing protein 1 (POPDC1).